A 193-amino-acid polypeptide reads, in one-letter code: Putative manganese efflux pump MntP (193 aa).

A run of 6 helical transmembrane segments spans residues 6–26, 41–61, 65–85, 107–127, 132–152, and 169–189; these read LLGL…AVGI, YHFG…GTGI, TQSY…ANMI, LIIL…SLSM, IWYP…FGML, and VLGG…NGVF.

Belongs to the MntP (TC 9.B.29) family.

Its subcellular location is the cell inner membrane. Functionally, probably functions as a manganese efflux pump. The chain is Putative manganese efflux pump MntP from Desulfotalea psychrophila (strain LSv54 / DSM 12343).